The chain runs to 165 residues: Alanine- and arginine-rich domain-containing protein (165 aa).

Residues 136 to 165 (QQLKKRQDQERASKPQSPQDEEMNPECGNA) are disordered.

This chain is Alanine- and arginine-rich domain-containing protein (Aard), found in Rattus norvegicus (Rat).